The following is a 334-amino-acid chain: Galactosylgalactosylxylosylprotein 3-beta-glucuronosyltransferase 1 (334 aa).

The Cytoplasmic segment spans residues 1–6; the sequence is MPKRRD. The essential for transport from endoplasmic reticulum to Golgi apparatus and interaction with SAR1A stretch occupies residues 3 to 5; it reads KRR. Residues 7–27 form a helical; Signal-anchor for type II membrane protein membrane-spanning segment; the sequence is ILAIVLIVLPWTLLITVWHQS. The Lumenal portion of the chain corresponds to 28-334; that stretch reads SLAPLLAVHK…KGFTDPSVEI (307 aa). 91–93 contacts UDP-alpha-D-glucuronate; the sequence is PTY. 2 positions are modified to phosphothreonine: Thr-103 and Thr-108. Asp-122 contributes to the UDP-alpha-D-glucuronate binding site. The N-linked (GlcNAc...) asparagine glycan is linked to Asn-140. Positions 165 and 170 each coordinate UDP-alpha-D-glucuronate. Asn-184 carries an N-linked (GlcNAc...) asparagine glycan. 195–197 provides a ligand contact to UDP-alpha-D-glucuronate; sequence DDD. Asp-197 lines the Mn(2+) pocket. Positions 245–254 are interaction with galactose moiety of substrate glycoprotein; the sequence is FDPHRPFAID. Catalysis depends on Glu-284, which acts as the Proton donor/acceptor. Residue Asn-303 is glycosylated (N-linked (GlcNAc...) asparagine). 311 to 313 contributes to the UDP-alpha-D-glucuronate binding site; it reads HTR.

It belongs to the glycosyltransferase 43 family. Homodimer. Interacts with SAR1A. It depends on Mn(2+) as a cofactor. Post-translationally, the soluble form derives from the membrane form by proteolytic processing.

The protein localises to the golgi apparatus membrane. It localises to the secreted. Its subcellular location is the endoplasmic reticulum membrane. It carries out the reaction 3-O-(beta-D-galactosyl-(1-&gt;3)-beta-D-galactosyl-(1-&gt;4)-beta-D-xylosyl)-L-seryl-[protein] + UDP-alpha-D-glucuronate = 3-O-(beta-D-GlcA-(1-&gt;3)-beta-D-Gal-(1-&gt;3)-beta-D-Gal-(1-&gt;4)-beta-D-Xyl)-L-seryl-[protein] + UDP + H(+). The protein operates within protein modification; protein glycosylation. Involved in the biosynthesis of L2/HNK-1 carbohydrate epitope on glycoproteins. Can also play a role in glycosaminoglycan biosynthesis. Substrates include asialo-orosomucoid (ASOR), asialo-fetuin, and asialo-neural cell adhesion molecule. Requires sphingomyelin for activity: stearoyl-sphingomyelin was the most effective, followed by palmitoyl-sphingomyelin and lignoceroyl-sphingomyelin. Activity was demonstrated only for sphingomyelin with a saturated fatty acid and not for that with an unsaturated fatty acid, regardless of the length of the acyl group. This is Galactosylgalactosylxylosylprotein 3-beta-glucuronosyltransferase 1 from Mus musculus (Mouse).